The following is a 157-amino-acid chain: Phosphopantetheine adenylyltransferase (157 aa).

Serine 8 lines the substrate pocket. ATP is bound by residues 8–9 (SF) and histidine 16. Residues lysine 40, threonine 72, and arginine 86 each contribute to the substrate site. ATP contacts are provided by residues 87 to 89 (GLR), glutamate 97, and 122 to 128 (FSFLSSS).

Belongs to the bacterial CoaD family. Homohexamer. Mg(2+) is required as a cofactor.

It is found in the cytoplasm. It carries out the reaction (R)-4'-phosphopantetheine + ATP + H(+) = 3'-dephospho-CoA + diphosphate. It participates in cofactor biosynthesis; coenzyme A biosynthesis; CoA from (R)-pantothenate: step 4/5. In terms of biological role, reversibly transfers an adenylyl group from ATP to 4'-phosphopantetheine, yielding dephospho-CoA (dPCoA) and pyrophosphate. This chain is Phosphopantetheine adenylyltransferase, found in Prochlorococcus marinus (strain MIT 9211).